A 346-amino-acid chain; its full sequence is Heat-inducible transcription repressor HrcA (346 aa).

It belongs to the HrcA family.

Its function is as follows. Negative regulator of class I heat shock genes (grpE-dnaK-dnaJ and groELS operons). Prevents heat-shock induction of these operons. The chain is Heat-inducible transcription repressor HrcA from Kineococcus radiotolerans (strain ATCC BAA-149 / DSM 14245 / SRS30216).